The primary structure comprises 45 residues: Iota-conotoxin-like R11.12 (45 aa).

Cystine bridges form between Cys5/Cys19, Cys12/Cys22, Cys18/Cys27, and Cys21/Cys36. Residue Leu43 is modified to D-leucine. Arg45 is a propeptide (removed by a carboxypeptidase).

It belongs to the conotoxin I1 superfamily. Expressed by the venom duct.

The protein resides in the secreted. Its function is as follows. Iota-conotoxins bind to voltage-gated sodium channels (Nav) and act as agonists by shifting the voltage-dependence of activation to more hyperpolarized levels. Produces general excitatory symptoms. This is Iota-conotoxin-like R11.12 from Conus radiatus (Rayed cone).